Here is a 656-residue protein sequence, read N- to C-terminus: Very long-chain specific acyl-CoA dehydrogenase, mitochondrial (656 aa).

Positions 1–33 (MQSARMTPSVGRQLLRLGARSSRSTTVLQGQPR) are disordered. The N-terminal 41 residues, 1–41 (MQSARMTPSVGRQLLRLGARSSRSTTVLQGQPRPISAQRLY), are a transit peptide targeting the mitochondrion. Positions 42-483 (AREATQAVLD…ALQGCMDKGK (442 aa)) are catalytic. K52 carries the post-translational modification N6-acetyllysine. 2 positions are modified to N6-acetyllysine; alternate: K72 and K128. 2 positions are modified to N6-succinyllysine; alternate: K72 and K128. K196 is modified (N6-succinyllysine). 215–224 (FCLTEPSSGS) is an FAD binding site. C238 carries the S-nitrosocysteine modification. K240 carries the post-translational modification N6-acetyllysine; alternate. K240 carries the post-translational modification N6-succinyllysine; alternate. 250-252 (WIS) contacts FAD. K269 carries the post-translational modification N6-succinyllysine. 2 positions are modified to N6-acetyllysine; alternate: K277 and K279. 2 positions are modified to N6-succinyllysine; alternate: K277 and K279. Residues K299 and K317 each carry the N6-acetyllysine modification. An N6-acetyllysine; alternate modification is found at K332. K332 is modified (N6-succinyllysine; alternate). At K373 the chain carries N6-succinyllysine. Position 462-464 (462-464 (FEG)) interacts with substrate. Catalysis depends on E463, which acts as the Proton acceptor. 465-467 (AND) contacts FAD. An N6-acetyllysine; alternate modification is found at K483. K483 carries the post-translational modification N6-succinyllysine; alternate. The tract at residues 484–517 (ELTGLGNALKNPFGNVGLLMGEAGKQLRRRTGIG) is membrane-anchoring. Phosphoserine is present on residues S518 and S523. At K551 the chain carries N6-acetyllysine. An N6-acetyllysine; alternate modification is found at K557. Residue K557 is modified to N6-succinyllysine; alternate. Q563 provides a ligand contact to FAD. The residue at position 640 (K640) is an N6-succinyllysine.

It belongs to the acyl-CoA dehydrogenase family. As to quaternary structure, homodimer. Homodimerizes after import into the mitochondrion. The cofactor is FAD. In terms of processing, S-nitrosylation at Cys-238 in liver improves catalytic efficiency.

It localises to the mitochondrion inner membrane. The catalysed reaction is a very-long-chain 2,3-saturated fatty acyl-CoA + oxidized [electron-transfer flavoprotein] + H(+) = a very-long-chain (2E)-enoyl-CoA + reduced [electron-transfer flavoprotein]. It catalyses the reaction dodecanoyl-CoA + oxidized [electron-transfer flavoprotein] + H(+) = (2E)-dodecenoyl-CoA + reduced [electron-transfer flavoprotein]. It carries out the reaction tetradecanoyl-CoA + oxidized [electron-transfer flavoprotein] + H(+) = (2E)-tetradecenoyl-CoA + reduced [electron-transfer flavoprotein]. The enzyme catalyses oxidized [electron-transfer flavoprotein] + hexadecanoyl-CoA + H(+) = (2E)-hexadecenoyl-CoA + reduced [electron-transfer flavoprotein]. The catalysed reaction is octadecanoyl-CoA + oxidized [electron-transfer flavoprotein] + H(+) = (2E)-octadecenoyl-CoA + reduced [electron-transfer flavoprotein]. It catalyses the reaction eicosanoyl-CoA + oxidized [electron-transfer flavoprotein] + H(+) = (2E)-eicosenoyl-CoA + reduced [electron-transfer flavoprotein]. It carries out the reaction docosanoyl-CoA + oxidized [electron-transfer flavoprotein] + H(+) = (2E)-docosenoyl-CoA + reduced [electron-transfer flavoprotein]. The enzyme catalyses tetracosanoyl-CoA + oxidized [electron-transfer flavoprotein] + H(+) = (2E)-tetracosenoyl-CoA + reduced [electron-transfer flavoprotein]. The protein operates within lipid metabolism; mitochondrial fatty acid beta-oxidation. Its function is as follows. Very long-chain specific acyl-CoA dehydrogenase is one of the acyl-CoA dehydrogenases that catalyze the first step of mitochondrial fatty acid beta-oxidation, an aerobic process breaking down fatty acids into acetyl-CoA and allowing the production of energy from fats. The first step of fatty acid beta-oxidation consists in the removal of one hydrogen from C-2 and C-3 of the straight-chain fatty acyl-CoA thioester, resulting in the formation of trans-2-enoyl-CoA. Among the different mitochondrial acyl-CoA dehydrogenases, very long-chain specific acyl-CoA dehydrogenase acts specifically on acyl-CoAs with saturated 12 to 24 carbons long primary chains. In Mus musculus (Mouse), this protein is Very long-chain specific acyl-CoA dehydrogenase, mitochondrial.